Consider the following 453-residue polypeptide: Asparagine--tRNA ligase (453 aa).

This sequence belongs to the class-II aminoacyl-tRNA synthetase family. Homodimer.

It is found in the cytoplasm. It carries out the reaction tRNA(Asn) + L-asparagine + ATP = L-asparaginyl-tRNA(Asn) + AMP + diphosphate + H(+). The chain is Asparagine--tRNA ligase from Malacoplasma penetrans (strain HF-2) (Mycoplasma penetrans).